Reading from the N-terminus, the 798-residue chain is Protocadherin beta-13 (798 aa).

An N-terminal signal peptide occupies residues 1–28 (MEASGKLICRQRQVLFSFLLLGLSLAGA). Over 29–690 (AEPRSYSVVE…AQADSLTVYL (662 aa)) the chain is Extracellular. Cadherin domains are found at residues 36–134 (VVEE…SPVF), 139–243 (MLVK…APEF), 248–348 (YRVQ…APEV), 353–451 (FTSP…APAF), and 456–561 (YTLF…SPFV). Residues N418 and N436 are each glycosylated (N-linked (GlcNAc...) asparagine). N-linked (GlcNAc...) asparagine glycosylation is present at N567. The Cadherin 6 domain occupies 568–671 (GSAPCTELVP…LVDGFSQPYL (104 aa)). Residues 691–711 (VVALASVSSLFLFSVLLFVAV) form a helical membrane-spanning segment. The Cytoplasmic segment spans residues 712–798 (RLCRRSRAAS…FPNNFGFNIQ (87 aa)).

The protein localises to the cell membrane. In terms of biological role, potential calcium-dependent cell-adhesion protein. May be involved in the establishment and maintenance of specific neuronal connections in the brain. The protein is Protocadherin beta-13 (PCDHB13) of Pan troglodytes (Chimpanzee).